A 130-amino-acid polypeptide reads, in one-letter code: Small ribosomal subunit protein uS9 (130 aa).

The protein belongs to the universal ribosomal protein uS9 family.

This chain is Small ribosomal subunit protein uS9, found in Polaromonas naphthalenivorans (strain CJ2).